The sequence spans 198 residues: B9 domain-containing protein 1 (198 aa).

The C2 B9-type domain maps to 8–126 (FLLNVSGQIE…TIPMFVPESS (119 aa)).

This sequence belongs to the B9D family. In terms of assembly, part of the tectonic-like complex (also named B9 complex).

The protein resides in the cytoplasm. The protein localises to the cytoskeleton. Its subcellular location is the cilium basal body. In terms of biological role, component of the tectonic-like complex, a complex localized at the transition zone of primary cilia and acting as a barrier that prevents diffusion of transmembrane proteins between the cilia and plasma membranes. Required for ciliogenesis and sonic hedgehog/SHH signaling. This Xenopus laevis (African clawed frog) protein is B9 domain-containing protein 1 (b9d1).